The primary structure comprises 271 residues: 3-methyl-2-oxobutanoate hydroxymethyltransferase 1 (271 aa).

D53 and D92 together coordinate Mg(2+). Residues 53-54 (DS), D92, and K120 each bind 3-methyl-2-oxobutanoate. Position 122 (E122) interacts with Mg(2+). The active-site Proton acceptor is the E189.

The protein belongs to the PanB family. As to quaternary structure, homodecamer; pentamer of dimers. It depends on Mg(2+) as a cofactor.

The protein resides in the cytoplasm. The enzyme catalyses 3-methyl-2-oxobutanoate + (6R)-5,10-methylene-5,6,7,8-tetrahydrofolate + H2O = 2-dehydropantoate + (6S)-5,6,7,8-tetrahydrofolate. The protein operates within cofactor biosynthesis; (R)-pantothenate biosynthesis; (R)-pantoate from 3-methyl-2-oxobutanoate: step 1/2. In terms of biological role, catalyzes the reversible reaction in which hydroxymethyl group from 5,10-methylenetetrahydrofolate is transferred onto alpha-ketoisovalerate to form ketopantoate. The sequence is that of 3-methyl-2-oxobutanoate hydroxymethyltransferase 1 from Burkholderia ambifaria (strain ATCC BAA-244 / DSM 16087 / CCUG 44356 / LMG 19182 / AMMD) (Burkholderia cepacia (strain AMMD)).